A 262-amino-acid chain; its full sequence is NADPH-dependent 7-cyano-7-deazaguanine reductase (262 aa).

69 to 71 contacts substrate; sequence IES. 71-72 contacts NADPH; it reads SK. Cysteine 170 serves as the catalytic Thioimide intermediate. The Proton donor role is filled by aspartate 177. Substrate is bound at residue 209–210; sequence HE. Residue 238–239 coordinates NADPH; it reads RG.

Belongs to the GTP cyclohydrolase I family. QueF type 2 subfamily. Homodimer.

Its subcellular location is the cytoplasm. The enzyme catalyses 7-aminomethyl-7-carbaguanine + 2 NADP(+) = 7-cyano-7-deazaguanine + 2 NADPH + 3 H(+). It participates in tRNA modification; tRNA-queuosine biosynthesis. In terms of biological role, catalyzes the NADPH-dependent reduction of 7-cyano-7-deazaguanine (preQ0) to 7-aminomethyl-7-deazaguanine (preQ1). The sequence is that of NADPH-dependent 7-cyano-7-deazaguanine reductase from Buchnera aphidicola subsp. Schizaphis graminum (strain Sg).